We begin with the raw amino-acid sequence, 235 residues long: uncharacterized protein (235 aa).

Disordered regions lie at residues 20–64 (IHPN…LPIK) and 140–164 (SQFF…NFDQ). Low complexity-rich tracts occupy residues 30–60 (NNNN…SNNN) and 140–161 (SQFF…NNKN). A coiled-coil region spans residues 174–213 (KYMEFLSDIEQLNSDLKESKDNLESISIEMVLLETRLKGL).

This is an uncharacterized protein from Dictyostelium discoideum (Social amoeba).